Consider the following 433-residue polypeptide: Sulfhydrylase FUB7 (433 aa).

N6-(pyridoxal phosphate)lysine is present on Lys-211.

The protein belongs to the trans-sulfuration enzymes family. The cofactor is pyridoxal 5'-phosphate.

Its pathway is mycotoxin biosynthesis. In terms of biological role, sulfhydrylase; part of the gene cluster that mediates the biosynthesis of fusaric acid, a mycotoxin with low to moderate toxicity to animals and humans, but with high phytotoxic properties. L-aspartate is suggested as fusaric acid amino acid precursor that is activated and further processed to O-acetyl-L-homoserine by cluster enzymes aspartate kinase FUB3 and homoserine O-acetyltransferase FUB5, as well as enzymes of the primary metabolism. The polyketide synthase (PKS) FUB1 generates the triketide trans-2-hexenal which is presumptively released by the hydrolase FUB4 and linked to the NRPS-bound amino acid precursor by NAD(P)-dependent dehydrogenase FUB6. FUB1, FUB4, and the non-canonical NRPS Fub8 may form an enzyme complex. Further processing of the NRPS-bound intermediate might be carried out by FUB6 and the sulfhydrylase FUB7, enabling a spontaneous electrocyclization to close the carbon backbone of fusaric acid. Dihydrofusaric acid is likely to be released via reduction by the thioester reductase (TR) domain of FUB8 whereupon the final oxidation to fusaric acid may (also) be performed by the FMN-dependent dehydrogenase FUB9. This is Sulfhydrylase FUB7 from Fusarium oxysporum f. sp. lycopersici (strain 4287 / CBS 123668 / FGSC 9935 / NRRL 34936) (Fusarium vascular wilt of tomato).